The primary structure comprises 125 residues: Protein ApaG (125 aa).

Positions 3-125 constitute an ApaG domain; it reads TAVTEGIEVT…FPLVVPGSLN (123 aa).

In Anaeromyxobacter dehalogenans (strain 2CP-1 / ATCC BAA-258), this protein is Protein ApaG.